A 431-amino-acid polypeptide reads, in one-letter code: Tol-Pal system protein TolB (431 aa).

Residues 1 to 18 (MKALLLSLLLLLPVVALA) form the signal peptide. Residues 410-431 (LPLRTEKGTYQTPDWSPLPQAQ) form a disordered region.

The protein belongs to the TolB family. In terms of assembly, the Tol-Pal system is composed of five core proteins: the inner membrane proteins TolA, TolQ and TolR, the periplasmic protein TolB and the outer membrane protein Pal. They form a network linking the inner and outer membranes and the peptidoglycan layer.

The protein resides in the periplasm. Part of the Tol-Pal system, which plays a role in outer membrane invagination during cell division and is important for maintaining outer membrane integrity. This Myxococcus xanthus protein is Tol-Pal system protein TolB.